The sequence spans 152 residues: Transcription elongation factor Spt5 (152 aa).

One can recognise a KOW domain in the interval 99 to 129 (EGDLVEVISGPFRGMQAQVVRVESTKNEVVL).

Belongs to the archaeal Spt5 family. Heterodimer composed of Spt4 and Spt5. Interacts with RNA polymerase (RNAP).

In terms of biological role, stimulates transcription elongation. The protein is Transcription elongation factor Spt5 of Sulfolobus acidocaldarius (strain ATCC 33909 / DSM 639 / JCM 8929 / NBRC 15157 / NCIMB 11770).